The sequence spans 188 residues: UPF0301 protein ABO_0112 (188 aa).

Belongs to the UPF0301 (AlgH) family.

The protein is UPF0301 protein ABO_0112 of Alcanivorax borkumensis (strain ATCC 700651 / DSM 11573 / NCIMB 13689 / SK2).